Reading from the N-terminus, the 147-residue chain is MKFTKSLLLLIVAVFASSNAAETFSNFQVTNSEASSPCVTTPVELKVNTCQSACGSILNVLPVTGSTSKFTFNQFGAQDTKCAATPTSSNEFTCVDGKSKVAIGSTTYSVVCVPDKTNSSESDSSDSTRIGASFALAAAALLSMIAL.

The first 20 residues, 1 to 20, serve as a signal peptide directing secretion; sequence MKFTKSLLLLIVAVFASSNA. Asparagine 118 is lipidated: GPI-like-anchor amidated asparagine. N-linked (GlcNAc...) asparagine glycosylation is present at asparagine 118. Residues 119-147 constitute a propeptide, removed in mature form; that stretch reads SSESDSSDSTRIGASFALAAAALLSMIAL.

It belongs to the ponticulin family. The GPI-like-anchor contains a phosphoceramide group, rather than a phosphatidyl group.

The protein resides in the cell membrane. This chain is Ponticulin-like protein C4 (ponC4), found in Dictyostelium discoideum (Social amoeba).